The primary structure comprises 1163 residues: Ankyrin repeat-containing protein F37A4.4 (1163 aa).

An ANK repeat occupies 856 to 885; sequence YGNTALHVATRRGYQNLVEILIKHGADRSF. In terms of domain architecture, BRCT spans 929–1025; the sequence is LCVPEKFPVS…KLIEKDCDYL (97 aa).

This is Ankyrin repeat-containing protein F37A4.4 from Caenorhabditis elegans.